We begin with the raw amino-acid sequence, 168 residues long: Acetolactate synthase small subunit (168 aa).

The region spanning Thr7 to Glu82 is the ACT domain.

This sequence belongs to the acetolactate synthase small subunit family. Dimer of large and small chains.

The enzyme catalyses 2 pyruvate + H(+) = (2S)-2-acetolactate + CO2. Its pathway is amino-acid biosynthesis; L-isoleucine biosynthesis; L-isoleucine from 2-oxobutanoate: step 1/4. The protein operates within amino-acid biosynthesis; L-valine biosynthesis; L-valine from pyruvate: step 1/4. The chain is Acetolactate synthase small subunit (ilvH) from Mycobacterium bovis (strain ATCC BAA-935 / AF2122/97).